The primary structure comprises 244 residues: Lymphotoxin-beta (244 aa).

Residues 1-18 (MGALGLEGRGGRLQGRGS) are Cytoplasmic-facing. The chain crosses the membrane as a helical; Signal-anchor for type II membrane protein span at residues 19–48 (LLLAVAGATSLVTLLLAVPITVLAVLALVP). The Extracellular portion of the chain corresponds to 49–244 (QDQGGLVTDT…KTFFGAVMVG (196 aa)). The THD domain occupies 88–243 (PAAHLIGAPL…GKTFFGAVMV (156 aa)). A glycan (N-linked (GlcNAc...) asparagine) is linked at N222.

Belongs to the tumor necrosis factor family. As to quaternary structure, heterotrimer of either two LTB and one LTA subunits or (less prevalent) two LTA and one LTB subunits.

The protein resides in the membrane. In terms of biological role, cytokine that binds to LTBR/TNFRSF3. May play a specific role in immune response regulation. Provides the membrane anchor for the attachment of the heterotrimeric complex to the cell surface. This chain is Lymphotoxin-beta (LTB), found in Macaca mulatta (Rhesus macaque).